A 207-amino-acid polypeptide reads, in one-letter code: UPF0319 protein VV1_2115 (207 aa).

Positions 1–18 (MLRVLGLAGMLMSFNIHA) are cleaved as a signal peptide.

Belongs to the UPF0319 family.

The sequence is that of UPF0319 protein VV1_2115 from Vibrio vulnificus (strain CMCP6).